The following is a 166-amino-acid chain: Ureidoglycolate lyase (166 aa).

Belongs to the ureidoglycolate lyase family. In terms of assembly, homodimer. It depends on Ni(2+) as a cofactor.

The enzyme catalyses (S)-ureidoglycolate = urea + glyoxylate. It functions in the pathway nitrogen metabolism; (S)-allantoin degradation. Functionally, catalyzes the catabolism of the allantoin degradation intermediate (S)-ureidoglycolate, generating urea and glyoxylate. Involved in the utilization of allantoin as nitrogen source. The protein is Ureidoglycolate lyase of Rhizobium leguminosarum bv. trifolii (strain WSM2304).